The sequence spans 190 residues: Biphenyl-2,3-diol 1,2-dioxygenase 2 (190 aa).

Residues 6–124 (KFAHVVLQTS…DGNFVELQID (119 aa)) form the VOC domain. Fe cation contacts are provided by histidine 9, histidine 72, and glutamate 120.

Belongs to the extradiol ring-cleavage dioxygenase family. As to quaternary structure, homohexamer. Fe(2+) is required as a cofactor.

It catalyses the reaction biphenyl-2,3-diol + O2 = 2-hydroxy-6-oxo-6-phenylhexa-2,4-dienoate + H(+). It participates in xenobiotic degradation; biphenyl degradation; 2-hydroxy-2,4-pentadienoate and benzoate from biphenyl: step 3/4. The polypeptide is Biphenyl-2,3-diol 1,2-dioxygenase 2 (bphC2) (Rhodococcus globerulus).